The primary structure comprises 140 residues: Type II secretion system core protein G (140 aa).

Positions 1–6 are cleaved as a propeptide — leader sequence; that stretch reads MQRQRG. Phe-7 is subject to N-methylphenylalanine. Residues 7–27 form a helical membrane-spanning segment; the sequence is FTLLEIMVVIVILGVLASLVV. The tract at residues 120–140 is disordered; that stretch reads LGPDGVPESNDDIGNWTIGKK.

This sequence belongs to the GSP G family. As to quaternary structure, type II secretion system is composed of four main components: the outer membrane complex, the inner membrane complex, the cytoplasmic secretion ATPase and the periplasm-spanning pseudopilus. Forms homomultimers. In terms of processing, cleaved by the prepilin peptidase. Methylated by prepilin peptidase at the amino group of the N-terminal phenylalanine once the leader sequence is cleaved.

Its subcellular location is the cell inner membrane. In terms of biological role, core component of the type II secretion system required for the energy-dependent secretion of extracellular factors such as proteases and toxins from the periplasm. Pseudopilin (pilin-like) protein that polymerizes to form the pseudopilus. Further polymerization triggers pseudopilus growth. This chain is Type II secretion system core protein G (pulG), found in Klebsiella pneumoniae.